The following is a 207-amino-acid chain: Ribosomal RNA small subunit methyltransferase G (207 aa).

S-adenosyl-L-methionine-binding positions include Gly76, Gln81, 127 to 128 (VE), and Arg141.

It belongs to the methyltransferase superfamily. RNA methyltransferase RsmG family.

The protein resides in the cytoplasm. The enzyme catalyses guanosine(527) in 16S rRNA + S-adenosyl-L-methionine = N(7)-methylguanosine(527) in 16S rRNA + S-adenosyl-L-homocysteine. In terms of biological role, specifically methylates the N7 position of guanine in position 527 of 16S rRNA. In Neisseria meningitidis serogroup C / serotype 2a (strain ATCC 700532 / DSM 15464 / FAM18), this protein is Ribosomal RNA small subunit methyltransferase G.